We begin with the raw amino-acid sequence, 430 residues long: Glutamate-1-semialdehyde 2,1-aminomutase (430 aa).

K267 carries the post-translational modification N6-(pyridoxal phosphate)lysine.

This sequence belongs to the class-III pyridoxal-phosphate-dependent aminotransferase family. HemL subfamily. Homodimer. It depends on pyridoxal 5'-phosphate as a cofactor.

The protein localises to the cytoplasm. It carries out the reaction (S)-4-amino-5-oxopentanoate = 5-aminolevulinate. It functions in the pathway porphyrin-containing compound metabolism; protoporphyrin-IX biosynthesis; 5-aminolevulinate from L-glutamyl-tRNA(Glu): step 2/2. The sequence is that of Glutamate-1-semialdehyde 2,1-aminomutase from Cytophaga hutchinsonii (strain ATCC 33406 / DSM 1761 / CIP 103989 / NBRC 15051 / NCIMB 9469 / D465).